Reading from the N-terminus, the 218-residue chain is Thiopurine S-methyltransferase (218 aa).

Tryptophan 11, leucine 46, glutamate 67, and arginine 122 together coordinate S-adenosyl-L-methionine.

The protein belongs to the class I-like SAM-binding methyltransferase superfamily. TPMT family.

It localises to the cytoplasm. It catalyses the reaction S-adenosyl-L-methionine + a thiopurine = S-adenosyl-L-homocysteine + a thiopurine S-methylether.. In Vibrio cholerae serotype O1 (strain ATCC 39541 / Classical Ogawa 395 / O395), this protein is Thiopurine S-methyltransferase.